The chain runs to 138 residues: Acidic phospholipase A2 Tbo-E6 (138 aa).

The signal sequence occupies residues 1–16 (MRTLWILAVLLLGVKG). 7 disulfide bridges follow: C42–C131, C44–C60, C59–C111, C65–C138, C66–C104, C73–C97, and C91–C102. The Ca(2+) site is built by Y43, G45, and G47. The active site involves H63. D64 contributes to the Ca(2+) binding site. D105 is a catalytic residue.

Monomer. Ca(2+) is required as a cofactor. As to expression, expressed by the venom gland.

It is found in the secreted. It carries out the reaction a 1,2-diacyl-sn-glycero-3-phosphocholine + H2O = a 1-acyl-sn-glycero-3-phosphocholine + a fatty acid + H(+). Functionally, snake venom phospholipase A2 (PLA2) that impairs hemostasis. It weakly inhibits ADP-induced platelet aggregation when tested on platelet rich plasma from human and rabbit blood (15-25% of inhibition at 5-10 ug of enzyme), and dose-dependently inhibits blood coagulation, possibly by inhibiting thrombin activation. Exhibits high hydrolytic activities toward L-dipalmitoyl phosphatidylcholine. PLA2 catalyzes the calcium-dependent hydrolysis of the 2-acyl groups in 3-sn-phosphoglycerides. The chain is Acidic phospholipase A2 Tbo-E6 from Craspedocephalus borneensis (Borneo pit viper).